A 470-amino-acid chain; its full sequence is Aspartyl aminopeptidase (470 aa).

Zn(2+) is bound at residue His92. His166 lines the substrate pocket. A Zn(2+)-binding site is contributed by Asp263. Residue Glu299 participates in substrate binding. Residues Glu300 and Asp343 each coordinate Zn(2+). Substrate contacts are provided by Asp343, His346, Lys371, and Tyr378. His437 is a binding site for Zn(2+).

This sequence belongs to the peptidase M18 family. As to quaternary structure, tetrahedron-shaped homododecamer built from six homodimers. The cofactor is Zn(2+). In terms of tissue distribution, expressed in various cell types and tissues including the pharynx, neurons, body wall muscle, intestine and vulva.

It is found in the cytoplasm. Its subcellular location is the cytosol. The catalysed reaction is Release of an N-terminal aspartate or glutamate from a peptide, with a preference for aspartate.. Its function is as follows. Aminopeptidase with specificity towards an acidic amino acid at the N-terminus. Plays a role in membrane trafficking and is specifically involved in the recycling and degradation of endocytic cargo. The sequence is that of Aspartyl aminopeptidase from Caenorhabditis elegans.